Here is a 190-residue protein sequence, read N- to C-terminus: Small ribosomal subunit protein uS4c (190 aa).

An S4 RNA-binding domain is found at 92 to 152; that stretch reads RLDHVVYRAG…KSPSSAQLPP (61 aa).

The protein belongs to the universal ribosomal protein uS4 family. In terms of assembly, part of the 30S ribosomal subunit. Contacts protein S5. The interaction surface between S4 and S5 is involved in control of translational fidelity.

The protein resides in the plastid. It localises to the chloroplast. In terms of biological role, one of the primary rRNA binding proteins, it binds directly to 16S rRNA where it nucleates assembly of the body of the 30S subunit. With S5 and S12 plays an important role in translational accuracy. The chain is Small ribosomal subunit protein uS4c (rps4) from Cyanidioschyzon merolae (strain NIES-3377 / 10D) (Unicellular red alga).